The chain runs to 214 residues: Large ribosomal subunit protein bL25 (214 aa).

Positions 189 to 214 (IHASRKAKADEDEAAEGEEGEEGAED) are disordered. Positions 198 to 214 (DEDEAAEGEEGEEGAED) are enriched in acidic residues.

This sequence belongs to the bacterial ribosomal protein bL25 family. CTC subfamily. Part of the 50S ribosomal subunit; part of the 5S rRNA/L5/L18/L25 subcomplex. Contacts the 5S rRNA. Binds to the 5S rRNA independently of L5 and L18.

In terms of biological role, this is one of the proteins that binds to the 5S RNA in the ribosome where it forms part of the central protuberance. The sequence is that of Large ribosomal subunit protein bL25 from Alkalilimnicola ehrlichii (strain ATCC BAA-1101 / DSM 17681 / MLHE-1).